A 199-amino-acid polypeptide reads, in one-letter code: Protein GrpE (199 aa).

The segment at 20-52 is disordered; sequence YKVENEILEEETDEESQHQEPALGHPSYTALEE.

Belongs to the GrpE family. Homodimer.

It is found in the cytoplasm. Functionally, participates actively in the response to hyperosmotic and heat shock by preventing the aggregation of stress-denatured proteins, in association with DnaK and GrpE. It is the nucleotide exchange factor for DnaK and may function as a thermosensor. Unfolded proteins bind initially to DnaJ; upon interaction with the DnaJ-bound protein, DnaK hydrolyzes its bound ATP, resulting in the formation of a stable complex. GrpE releases ADP from DnaK; ATP binding to DnaK triggers the release of the substrate protein, thus completing the reaction cycle. Several rounds of ATP-dependent interactions between DnaJ, DnaK and GrpE are required for fully efficient folding. The polypeptide is Protein GrpE (Legionella pneumophila (strain Corby)).